Reading from the N-terminus, the 189-residue chain is MSRIGKLPISIPTGVTVTLKDNVVTVKGPKGELSQFVDPSINVAIEDGHVMLTENENAMLDNVKQRHAFHGLYRSLVNNMVIGVSEGYKKELELVGVGYRASNNGNIIDFALGYTHNIFMQLPPEIKVETKSERNKNPLIILESCDKQLLGQVCSKIRSFRKPEPYKGKGIKFVGEEIRRKSGKSAGAK.

It belongs to the universal ribosomal protein uL6 family. In terms of assembly, part of the 50S ribosomal subunit.

In terms of biological role, this protein binds to the 23S rRNA, and is important in its secondary structure. It is located near the subunit interface in the base of the L7/L12 stalk, and near the tRNA binding site of the peptidyltransferase center. The protein is Large ribosomal subunit protein uL6 of Phocaeicola vulgatus (strain ATCC 8482 / DSM 1447 / JCM 5826 / CCUG 4940 / NBRC 14291 / NCTC 11154) (Bacteroides vulgatus).